The primary structure comprises 576 residues: Carboxypeptidase S (576 aa).

At 1–19 (MIALPVEKAPRKSLWQRHR) the chain is on the cytoplasmic side. Lys8 is covalently cross-linked (Glycyl lysine isopeptide (Lys-Gly) (interchain with G-Cter in ubiquitin)). Residues 20 to 40 (AFISGIVALIIIGTFFLTSGL) form a helical membrane-spanning segment. Over 41-576 (HPAPPHEAKR…EYIVNVNEYA (536 aa)) the chain is Lumenal. A disordered region spans residues 44–65 (PPHEAKRPHHGKGPMHSPKCEK). N-linked (GlcNAc...) asparagine glycosylation is present at Asn88. Residue His168 coordinates Zn(2+). Asp170 is an active-site residue. An N-linked (GlcNAc...) asparagine glycan is attached at Asn176. Asp205 contributes to the Zn(2+) binding site. Asn228 is a glycosylation site (N-linked (GlcNAc...) asparagine). Catalysis depends on Glu239, which acts as the Proton acceptor. Zn(2+) contacts are provided by Glu240 and Asp268. Asn381 and Asn525 each carry an N-linked (GlcNAc...) asparagine glycan. His547 is a Zn(2+) binding site.

This sequence belongs to the peptidase M20A family. YscS is synthesized as one polypeptide chain precursor which after carbohydrate modification in the secretory pathway yields two active precursor molecules. The proteolytically unprocessed forms are associated with the membrane, whereas the mature forms of the enzyme are soluble. The cofactor is Zn(2+). In terms of processing, glycosylated. Post-translationally, ubiquitinated. Ubiquitination mediates sorting into internal vesicles in late endosomes. TUL1 is required for ubiquitination.

The protein resides in the vacuole membrane. It carries out the reaction Release of a C-terminal amino acid from a peptide in which glycine is the penultimate amino acid, e.g. Z-Gly-|-Leu.. In terms of biological role, necessary for use of certain peptides as sole nitrogen source. May also cleave intracellularly generated peptides to recycle amino acids for protein synthesis. The chain is Carboxypeptidase S (CPS1) from Saccharomyces cerevisiae (strain ATCC 204508 / S288c) (Baker's yeast).